Here is a 351-residue protein sequence, read N- to C-terminus: Uroporphyrinogen decarboxylase (351 aa).

Substrate contacts are provided by residues 25–29 (RQAGR), aspartate 74, tyrosine 151, serine 206, and histidine 325.

It belongs to the uroporphyrinogen decarboxylase family. In terms of assembly, homodimer.

The protein resides in the cytoplasm. The catalysed reaction is uroporphyrinogen III + 4 H(+) = coproporphyrinogen III + 4 CO2. Its pathway is porphyrin-containing compound metabolism; protoporphyrin-IX biosynthesis; coproporphyrinogen-III from 5-aminolevulinate: step 4/4. Its function is as follows. Catalyzes the decarboxylation of four acetate groups of uroporphyrinogen-III to yield coproporphyrinogen-III. The polypeptide is Uroporphyrinogen decarboxylase (Chlorobium limicola (strain DSM 245 / NBRC 103803 / 6330)).